A 695-amino-acid chain; its full sequence is Highly divergent homeobox (695 aa).

DNA-binding regions (homeobox) lie at residues 3-63 (LRSV…SSKS) and 440-503 (ALQD…RLMG). The segment at 56–81 (RRKMSSKSALESGGAPPGTAHTAPSV) is disordered. The disordered stretch occupies residues 653 to 695 (QQALLSDLPPELEEMDFNHTSPEPDDTSFSLSSLSEKNASDSL). The segment covering 679-695 (TSFSLSSLSEKNASDSL) has biased composition (polar residues).

It localises to the nucleus. This chain is Highly divergent homeobox (HDX), found in Gallus gallus (Chicken).